A 478-amino-acid polypeptide reads, in one-letter code: Solute carrier family 49 member 4 (478 aa).

Residues 1–27 (MGSGWSSEEEERQPLLGPGLGPAPGAT) are disordered. Residues 1 to 51 (MGSGWSSEEEERQPLLGPGLGPAPGATRRGREAAAVLPAAGPSPGRVYGRR) lie on the Cytoplasmic side of the membrane. Residues 15 to 16 (LL) carry the Di-leucine motif; mediates lysosomal localization motif. A helical membrane pass occupies residues 52–72 (WLVLLLFSLLAFAQGLVWNTW). Topologically, residues 73–89 (GPIQNSARQAYSFTGWD) are lumenal. A helical transmembrane segment spans residues 90–110 (IALLVLWGPIGFLPCFAFMWL). The Cytoplasmic segment spans residues 111-117 (LDKRGLR). Residues 118 to 138 (ITVLLTSFLMVLGTGLRCIPV) traverse the membrane as a helical segment. Over 139–152 (SDLTLKKRLIHGGQ) the chain is Lumenal. Residues 153–173 (ILNGLAGPTVMNAAPFLSTTW) form a helical membrane-spanning segment. The Cytoplasmic portion of the chain corresponds to 174-184 (FSADERATATA). The chain crosses the membrane as a helical span at residues 185–205 (IASMLSYLGGACAFLVGPLVV). Residues 206–229 (PAPNGTAPLLTAESSRDHIKDRIE) are Lumenal-facing. An N-linked (GlcNAc...) asparagine glycan is attached at N209. Residues 230–250 (TVLYAEFGVVCLIFSATLAYF) form a helical membrane-spanning segment. Residues 251–281 (PPRPPLPPSVAAASQRLSYRRSFCRLLSNLR) are Cytoplasmic-facing. The chain crosses the membrane as a helical span at residues 282 to 302 (FLMIALAYAIPLGVFAGWSGV). The Lumenal portion of the chain corresponds to 303–314 (LDLILTPVHVSQ). The helical transmembrane segment at 315 to 335 (VDAGWIGFWSIVGGCVVGIAM) threads the bilayer. Over 336–347 (ARFADFIRGMLK) the chain is Cytoplasmic. A helical membrane pass occupies residues 348–368 (LILLLLFSGATLSSTWFTLTC). The Lumenal portion of the chain corresponds to 369–384 (LNSVTHLPLTTVTLYA). The helical transmembrane segment at 385–405 (SCILLGVFLNSSVPIFFELFV) threads the bilayer. At 406–414 (ETVYPVPEG) the chain is on the cytoplasmic side. Residues 415-435 (ITCGVVTFLSNMFMGVLLFFV) form a helical membrane-spanning segment. At 436–442 (TFYHTEL) the chain is on the lumenal side. Residues 443–463 (SWFNWCLPGSCLLSLLLILCF) traverse the membrane as a helical segment. Topologically, residues 464–478 (RESYDRLYLDVVVSV) are cytoplasmic.

Belongs to the major facilitator superfamily. Cleaved in lysosomes by cathepsin L between Leu-214 and Ala-261, generating a N-glycosylated N-terminal and a non-glycosylated C-terminal fragment.

Its subcellular location is the lysosome membrane. It catalyses the reaction pyridoxine(out) + n H(+)(out) = pyridoxine(in) + n H(+)(in). Its function is as follows. Mediates H(+)-dependent pyridoxine transport. The polypeptide is Solute carrier family 49 member 4 (Slc49a4) (Rattus norvegicus (Rat)).